A 345-amino-acid polypeptide reads, in one-letter code: NADH-quinone oxidoreductase subunit 8 (345 aa).

The next 8 membrane-spanning stretches (helical) occupy residues 15 to 35, 82 to 102, 115 to 135, 161 to 181, 190 to 210, 240 to 262, 278 to 298, and 309 to 329; these read MLLQGLAVIAFVMGSLIFMVY, FVYFLAPFLSMMLALFAFVVI, VGILFIFAASSLEVYGVIMGG, LGLIIIGIIISTGSMNLTAIV, LLNWYWLPHLPMVVLFFVSAL, YLLFMAGEYIAMYLMCALLSLLF, WWMVIKMWFWFYMFAMVKAIV, and IGWKVFLPLSLGWVVLVAILA.

Belongs to the complex I subunit 1 family. NDH-1 is composed of at least 14 different subunits, Nqo1 to Nqo14. The complex has a L-shaped structure, with the hydrophobic arm (subunits Nqo7, Nqo8, Nqo10 to Nqo14) embedded in the inner membrane and the hydrophilic peripheral arm (subunits Nqo1 to Nqo6, Nqo9) protruding into the bacterial cytoplasm. The hydrophilic domain contains all the redox centers.

It localises to the cell inner membrane. The catalysed reaction is a quinone + NADH + 5 H(+)(in) = a quinol + NAD(+) + 4 H(+)(out). Functionally, NDH-1 shuttles electrons from NADH, via FMN and iron-sulfur (Fe-S) centers, to quinones in the respiratory chain. The immediate electron acceptor for the enzyme in this species is believed to be ubiquinone. Couples the redox reaction to proton translocation (for every two electrons transferred, four hydrogen ions are translocated across the cytoplasmic membrane), and thus conserves the redox energy in a proton gradient. This chain is NADH-quinone oxidoreductase subunit 8, found in Paracoccus denitrificans.